An 847-amino-acid polypeptide reads, in one-letter code: Protein HIR2 (847 aa).

5 WD repeats span residues 10–46, 113–153, 155–194, 259–305, and 309–348; these read LHDG…NAAT, KDNE…LKSS, ELKS…TTKL, KFSP…PLFD, and VVNS…LGDV. The disordered stretch occupies residues 368 to 399; it reads PFKPKAEEPDTKLPPNKTAQQTTTNSKKQPKA. The segment covering 384–394 has biased composition (polar residues); it reads KTAQQTTTNSK. 2 WD repeats span residues 508–548 and 558–597; these read RKDN…IYVT and PMLL…IAFP.

Belongs to the WD repeat HIR1 family.

It localises to the nucleus. Its function is as follows. Required for replication-independent chromatin assembly and for the periodic repression of histone gene transcription during the cell cycle. The sequence is that of Protein HIR2 (HIR2) from Kluyveromyces lactis (strain ATCC 8585 / CBS 2359 / DSM 70799 / NBRC 1267 / NRRL Y-1140 / WM37) (Yeast).